The following is a 258-amino-acid chain: Flagellar brake protein YcgR (258 aa).

The PilZ domain maps to 131–248 (QKREYYRVAT…ALSLIQRYIT (118 aa)).

Belongs to the YcgR family. In terms of assembly, monomer. Interacts with the flagellar basal bodies.

It is found in the bacterial flagellum basal body. Its function is as follows. Acts as a flagellar brake, regulating swimming and swarming in a bis-(3'-5') cyclic diguanylic acid (c-di-GMP)-dependent manner. Binds 1 c-di-GMP dimer per subunit. Increasing levels of c-di-GMP lead to decreased motility. In Nitrosospira multiformis (strain ATCC 25196 / NCIMB 11849 / C 71), this protein is Flagellar brake protein YcgR.